The following is a 219-amino-acid chain: MKKTDWSQPLRNRLAEDYFPKMIEFINQTYQEGKVYPPENQIFRAIELTPLAQTKVIIVGQDPYPQPGKAQGLAFSYPATFKVNRPDSIVNIQKELREEGFSKDDSDLTAWAEQGVLLLNAVLTVPEFASNAHAGKIWEPLTDEIIKIASDDERPKVFILWGGFARKKAKLIDGSKHLILEAAHPSPLSASRGFFGSHPFSKTNEFLVESGQSPIDWSK.

Asp-62 (proton acceptor) is an active-site residue.

This sequence belongs to the uracil-DNA glycosylase (UDG) superfamily. UNG family.

The protein resides in the cytoplasm. It catalyses the reaction Hydrolyzes single-stranded DNA or mismatched double-stranded DNA and polynucleotides, releasing free uracil.. Its function is as follows. Excises uracil residues from the DNA which can arise as a result of misincorporation of dUMP residues by DNA polymerase or due to deamination of cytosine. This chain is Uracil-DNA glycosylase (ung), found in Lactococcus lactis subsp. lactis (strain IL1403) (Streptococcus lactis).